The following is a 334-amino-acid chain: Type II methyltransferase M.NlaIII (334 aa).

Belongs to the N(4)/N(6)-methyltransferase family.

It catalyses the reaction a 2'-deoxyadenosine in DNA + S-adenosyl-L-methionine = an N(6)-methyl-2'-deoxyadenosine in DNA + S-adenosyl-L-homocysteine + H(+). Its function is as follows. A methylase, recognizes the double-stranded sequence 5'-CATG-3', methylates A-2 on both strands and protects the DNA from cleavage by the NlaIII endonuclease. This chain is Type II methyltransferase M.NlaIII (nlaIIIM), found in Neisseria lactamica.